The following is a 1571-amino-acid chain: Neurexin-3 (1571 aa).

Positions 1 to 27 are cleaved as a signal peptide; sequence MSFTLHSVFFTLKVSIFLGSLVGLCLG. The Laminin G-like 1 domain maps to 28–202; sequence LEFMGLPNQW…SVQLEAEGPC (175 aa). The Extracellular portion of the chain corresponds to 28-1496; that stretch reads LEFMGLPNQW…EVIRESSSTT (1469 aa). Residues Asn-58 and Asn-105 are each glycosylated (N-linked (GlcNAc...) asparagine). The 38-residue stretch at 198–235 folds into the EGF-like 1 domain; that stretch reads AEGPCGERPCENGGICFLLDGHPTCDCSTTGYGGTLCS. 3 disulfides stabilise this stretch: Cys-202-Cys-213, Cys-207-Cys-222, and Cys-224-Cys-234. Laminin G-like domains are found at residues 258–440 and 447–639; these read VATF…VFKC and DPIN…KSSC. Ca(2+) contacts are provided by Asp-304, Leu-321, and Met-374. 5 cysteine pairs are disulfide-bonded: Cys-404-Cys-440, Cys-610-Cys-639, Cys-647-Cys-658, Cys-652-Cys-667, and Cys-669-Cys-679. Positions 643–680 constitute an EGF-like 2 domain; that stretch reads SAKQCDSYPCKNNAVCKDGWNRFICDCTGTGYWGRTCE. Laminin G-like domains lie at 685 to 857 and 871 to 1046; these read ILSY…IDYC and DPVT…ERGC. Ca(2+)-binding residues include Asp-732 and Leu-749. Asn-757 carries N-linked (GlcNAc...) asparagine glycosylation. Arg-807 serves as a coordination point for Ca(2+). Disulfide bonds link Cys-1018–Cys-1046, Cys-1053–Cys-1064, Cys-1058–Cys-1073, and Cys-1075–Cys-1085. Residues 1049–1086 form the EGF-like 3 domain; the sequence is PSTTCQEDSCANQGVCMQQWEGFTCDCSMTSYSGNQCN. Residues 1090–1290 form the Laminin G-like 6 domain; the sequence is ATYIFGKSGG…NPNIKINGSV (201 aa). Residues Asp-1142 and Ile-1159 each contribute to the Ca(2+) site. The N-linked (GlcNAc...) asparagine glycan is linked to Asn-1189. Residues Ile-1241 and Asn-1243 each coordinate Ca(2+). N-linked (GlcNAc...) asparagine glycans are attached at residues Asn-1287 and Asn-1331. The segment at 1324–1348 is disordered; the sequence is ATTTTRKNRSTASIQPTSDDLVSSA. The segment covering 1333–1348 has biased composition (polar residues); that stretch reads STASIQPTSDDLVSSA. The O-linked (Xyl...) (heparan sulfate) serine glycan is linked to Ser-1347. Residues 1497–1517 form a helical membrane-spanning segment; that stretch reads GMVVGIVAAAALCILILLYAM. The Cytoplasmic segment spans residues 1518 to 1571; sequence YKYRNRDEGSYQVDETRNYISNSAQSNGTLMKEKQASSKSGHKKQKNKDKEYYV. Residues 1539–1571 form a disordered region; sequence NSAQSNGTLMKEKQASSKSGHKKQKNKDKEYYV.

It belongs to the neurexin family. In terms of assembly, the laminin G-like domain 2 binds to NXPH1. Specific isoforms bind to alpha-dystroglycan. The cytoplasmic C-terminal region binds to CASK. Specific isoforms bind neuroligins NLGN1, NLGN2 and NLGN3. Interacts with CLSTN3. In terms of processing, O-glycosylated; contains heparan sulfate. Heparan sulfate attachment is required for synapse development by mediating interactions with neuroligins. Brain and arteries (at protein level).

It is found in the presynaptic cell membrane. Functionally, neuronal cell surface protein that may be involved in cell recognition and cell adhesion. May mediate intracellular signaling. This is Neurexin-3 (Nrxn3) from Mus musculus (Mouse).